The sequence spans 469 residues: CBL-interacting serine/threonine-protein kinase 16 (469 aa).

One can recognise a Protein kinase domain in the interval 15-278 (YNIGRLLGTG…MSEIKMIPWF (264 aa)). ATP-binding positions include 21–29 (LGTGNFAKV) and lysine 44. The active-site Proton acceptor is aspartate 139. An activation loop region spans residues 157–193 (DFGLSALMMPEGLGGRRGSSDDLLHTRCGTPAYVAPE). Serine 161 bears the Phosphoserine mark. Threonine 182 bears the Phosphothreonine mark. A disordered region spans residues 290 to 320 (IDETIPSPPEPPTKKKKKDLNEKEDDGASPR). The region spanning 317 to 342 (ASPRSFNAFQFITSMSSGFDLSNLFE) is the NAF domain. A PPI region spans residues 346–376 (KPKRMFTSKFPAKSVKERLETAAREMDMRVK). The tract at residues 447-469 (DDEDDVTTNDNVDTNDNKINNVS) is disordered. A compositionally biased stretch (low complexity) spans 454–469 (TNDNVDTNDNKINNVS).

It belongs to the protein kinase superfamily. CAMK Ser/Thr protein kinase family. SNF1 subfamily. In terms of assembly, part of a K(+)-channel calcium-sensing kinase/phosphatase complex composed by a calcium sensor CBL (CBL1, CBL2, CBL3 or CBL9), a kinase CIPK (CIPK6, CIPK16 or CIPK23), a phosphatase PP2C (AIP1) and a K(+)-channel (AKT1). Interacts with AKT1, CBL1, CBL2, CBL3 and CBL9. Requires Mn(2+) as cofactor.

It carries out the reaction L-seryl-[protein] + ATP = O-phospho-L-seryl-[protein] + ADP + H(+). It catalyses the reaction L-threonyl-[protein] + ATP = O-phospho-L-threonyl-[protein] + ADP + H(+). Its function is as follows. CIPK serine-threonine protein kinases interact with CBL proteins. Binding of a CBL protein to the regulatory NAF domain of CIPK protein lead to the activation of the kinase in a calcium-dependent manner. Downstream of CBL1, CBL2, CBL3 and CBL9, regulates by phosphorylation the K(+) conductance and uptake of AKT1. The chain is CBL-interacting serine/threonine-protein kinase 16 (CIPK16) from Arabidopsis thaliana (Mouse-ear cress).